Consider the following 551-residue polypeptide: HTH-type transcriptional regulator SgrR (551 aa).

Residues 1–116 (MPSARLQQQF…LVSHLGRSFR (116 aa)) enclose the HTH marR-type domain. A DNA-binding region (H-T-H motif) is located at residues 26 to 49 (LNELAALLSCSRRHMRTLLNTMQD). A solute-binding region spans residues 163 to 492 (ELEADIAHHW…IDWQADAARW (330 aa)).

In terms of biological role, activates the small RNA gene sgrS under glucose-phosphate stress conditions as well as yfdZ. Represses its own transcription under both stress and non-stress conditions. Might act as a sensor of the intracellular accumulation of phosphoglucose by binding these molecules in its C-terminal solute-binding domain. The sequence is that of HTH-type transcriptional regulator SgrR from Escherichia coli O1:K1 / APEC.